Here is a 180-residue protein sequence, read N- to C-terminus: Homeobox protein ceh-12 (180 aa).

The disordered stretch occupies residues 15 to 37 (SSQNEDQKLESHPSPPSQIPNYS). Residues 110–169 (MRRPRTAFSSEQLVQLEKQFSDNRYLSRPRRYQLAQQLSLSETQIKIWFQNRRMKNKRCP) constitute a DNA-binding region (homeobox).

Expressed in VB motor neurons in the ventral nerve cord.

Its subcellular location is the nucleus. Transcription factor. Plays a role, downstream from homeobox protein unc-4 and Wnt signaling, in specifying synaptic inputs to A-class motor neurons. Involved in patterning of the synaptic outputs of the postmitotic DA class cholinergic motor neurons. This is Homeobox protein ceh-12 (ceh-12) from Caenorhabditis elegans.